The following is a 616-amino-acid chain: Glycogenin-1 (616 aa).

UDP contacts are provided by L10, Y16, and R95. 11 residues coordinate UDP-alpha-D-glucose: L10, Y16, R95, K104, D120, D122, N158, S159, D185, D188, and Q189. UDP is bound by residues D120 and D122. Positions 120 and 122 each coordinate Mn(2+). The O-linked (Glc...) tyrosine glycan is linked to Y230. Positions 247, 250, and 253 each coordinate UDP. Mn(2+) is bound at residue H247. UDP-alpha-D-glucose is bound by residues G250 and K253. The segment covering 283–302 has biased composition (basic and acidic residues); the sequence is HQLNNEVSKPKISDSDKTET. Disordered stretches follow at residues 283–320, 335–354, 371–525, and 553–588; these read HQLN…PTTN, NQNA…NPVP, TNQP…EKDK, and RDAT…EMPN. The span at 377 to 386 shows a compositional bias: basic and acidic residues; sequence ESREYSKEND. The segment covering 400-419 has biased composition (polar residues); that stretch reads SPPNSTQELNSSYSVVSTQA. Over residues 450–461 the composition is skewed to low complexity; it reads STAASSNNNVSN. Polar residues-rich tracts occupy residues 462–485 and 492–503; these read QPDG…PSNP and DNIQKPSVSTND. The span at 567–576 shows a compositional bias: basic and acidic residues; the sequence is DKQEDMKLTA. Over residues 577–586 the composition is skewed to polar residues; the sequence is EETNQPQQEM. Residue Y598 is glycosylated (O-linked (Glc...) tyrosine).

Belongs to the glycosyltransferase 8 family. Glycogenin subfamily. Mn(2+) serves as cofactor.

It localises to the cytoplasm. Its subcellular location is the vacuole. The catalysed reaction is L-tyrosyl-[glycogenin] + UDP-alpha-D-glucose = alpha-D-glucosyl-L-tyrosyl-[glycogenin] + UDP + H(+). It catalyses the reaction [1,4-alpha-D-glucosyl](n)-L-tyrosyl-[glycogenin] + UDP-alpha-D-glucose = [1,4-alpha-D-glucosyl](n+1)-L-tyrosyl-[glycogenin] + UDP + H(+). Functionally, self-glucosylating initiator of glycogen synthesis. It catalyzes the formation of a short alpha (1,4)-glucosyl chain covalently attached via a glucose 1-O-tyrosyl linkage to internal tyrosine residues and these chains act as primers for the elongation reaction catalyzed by glycogen synthase. Capable of transferring glucosyl residues to unbound acceptors such as free oligoglucans or oligoglucan derivatives. In Saccharomyces cerevisiae (strain ATCC 204508 / S288c) (Baker's yeast), this protein is Glycogenin-1.